Consider the following 107-residue polypeptide: Protein RnfH (107 aa).

The interval 82–107 (ARRKRAEKAKEEGRANKVTGGRPIER) is disordered.

This sequence belongs to the UPF0125 (RnfH) family.

This Pseudoalteromonas translucida (strain TAC 125) protein is Protein RnfH.